The sequence spans 993 residues: MALAGKQYEGSLNNSRPNLWPSSIPGGKNEIITSLVTALDSMCTALSKLNTEVACIALHEESAFVVGTEKGRCFLNSRKELQADFQRFCIGAHKKDQENEVKRRNRDGIQNIQHVPLGPTSDIYLLRKMVEEIFEVLYSEALGKSNIVPVPYVKVMKEPGSVVVLGLPDGISFRKPAEYDLKSLMLILKHSHNIRFKLRIPTEESIREPKSCSELNSPPTSATKVIPETSQCHRLPIQEHPSSASNFPYSVSQPNQISLEPKQEVHSNMLGTNAVNQMLVQRPSAENNHDLSDCCGQQSPVAGSSLRQNVLASKHLLFSIVHDKTDKWDSFLRETEDINILRECVQILFNSRYAGALGLDHMVPVPYRKIACHPEAVEINGFPDKIPFKRPCTYGVPKLKRILEERHNIHFTIKSMFDQRIFDGTTFTKETTKSDSSSLGEEACSENQKAAALDMLGFPTGSRSEKSSISDECEPGTSSETTGVKLIKLEAEDPDIMQIAVPGTSSETSGVKIIKLESEDPDLIQITVPGTSNETSGVKPKLESEDPDLIQIAVPDRLAECVKNHLAPEDPSYVLDTGKVCDDRPCGVLRNENKHLDGIGDIIRQLRKHVENLFNRKYAKAIGASGPVKVPYAKFLMYPEDLFVLGLPEGVAFRRPNCFGITKLRRILEYSDGIQFVVKRPELISEGLEDCVVGSPGTLGFNDKSNEVILDETNTRPSFQESFDARLSRIDIANTLREQVQVLFNKKYGEALGIKYPVQVPYKRIKNNPGSVIIEGLPPGIPFRKPCTFGSQNLERILAVADKIRFTVTRPFQGLIPRPDDEDANRLGEKVILREQVKELFNEKYGKALGLDQPALIPYKLIRDNPDAVEVRGMPNDIPFRNPNSYDLHRLENILKAQDQIQMVVIKQLEPFPEICSEPPKIKNGNTGPKRKRKRVSEGNSISSASSNCSSSSSSSSNMDPISSAHHVSLVQWPMYMLDYGGLNMQLPGPINY.

2 GTF2I-like repeats span residues 117–211 and 332–426; these read LGPT…EPKS and LRET…DGTT. The disordered stretch occupies residues 461 to 480; it reads GSRSEKSSISDECEPGTSSE. GTF2I-like repeat units lie at residues 597 to 691, 727 to 821, and 824 to 918; these read DGIG…LEDC, LSRI…RPDD, and ANRL…ICSE. The interval 916–961 is disordered; it reads CSEPPKIKNGNTGPKRKRKRVSEGNSISSASSNCSSSSSSSSNMDP. The Nuclear localization signal motif lies at 929-936; sequence PKRKRKRV. Residues 938–961 show a composition bias toward low complexity; it reads EGNSISSASSNCSSSSSSSSNMDP.

The protein belongs to the TFII-I family. In terms of assembly, interacts (via repeats 4-5) with foxh1/fast1 (via Fork-head domain). Interacts with smad2 and smad3 (via MH1 domain) in a ligand (activin)-dependent manner. Interacts with pou5f1.1/oct-25 to form a repression complex on the promoters of the gsc and mix2 genes. Uniformly expressed in the embryo in pre- and early gastrula stages. Enriched in the head region of early neurula through tailbud stages.

The protein resides in the nucleus. Transcription factor that activates a subset of organizer-specific genes. Binds to the distal element (DE) of the gsc promoter to regulate its expression. In the presence of pou5f1.1/oct-25, forms a repression complex on the promoter of the gsc and mix2 genes to inhibit their transcription. The polypeptide is General transcription factor II-I repeat domain-containing protein 1 (gtf2ird1) (Xenopus laevis (African clawed frog)).